Reading from the N-terminus, the 207-residue chain is Coiled-coil domain-containing protein 25 (207 aa).

Over 1–104 the chain is Extracellular; it reads MVFYFTSAVV…SNLKKTADMD (104 aa). Residues 20-24 form a DNA-binding region; it reads KDKYE. A helical transmembrane segment spans residues 105–121; that stretch reads IGQIGFHRQKEVKIVAV. Residues 112–189 adopt a coiled-coil conformation; it reads RQKEVKIVAV…EDLKNYTSLM (78 aa). Topologically, residues 122 to 207 are cytoplasmic; that stretch reads EKKINEIVNR…EDGYDSDDFM (86 aa). Residues 140–183 are compositionally biased toward basic and acidic residues; it reads YPDLAAEKESRDREERNEKKAQIQEQKKKEKEEVKKKKEMEDLK. The segment at 140–207 is disordered; that stretch reads YPDLAAEKES…EDGYDSDDFM (68 aa). Positions 184-198 are enriched in polar residues; the sequence is NYTSLMKSDNMTTNE. Serine 203 bears the Phosphoserine mark.

It belongs to the CCDC25 family. As to quaternary structure, interacts (via cytoplasmic region) with ILK.

The protein resides in the cell membrane. It is found in the endomembrane system. Transmembrane receptor that senses neutrophil extracellular traps (NETs) and triggers the ILK-PARVB pathway to enhance cell motility. NETs are mainly composed of DNA fibers and are released by neutrophils to bind pathogens during inflammation. Specifically binds NETs on its extracellular region, in particular the 8-OHdG-enriched DNA present in NETs, and recruits ILK, initiating the ILK-PARVB cascade to induce cytoskeleton rearrangement and directional migration of cells. The sequence is that of Coiled-coil domain-containing protein 25 from Danio rerio (Zebrafish).